Consider the following 304-residue polypeptide: Oxygen-dependent coproporphyrinogen-III oxidase (304 aa).

Ser94 serves as a coordination point for substrate. A divalent metal cation is bound by residues His98 and His108. The active-site Proton donor is His108. 110–112 (NVR) is a substrate binding site. A divalent metal cation-binding residues include His147 and His177. The important for dimerization stretch occupies residues 242–277 (YVEFNLVYDRGTLFGLQTGGRTESILMSMPPLVRWE). Position 260–262 (260–262 (GGR)) interacts with substrate.

It belongs to the aerobic coproporphyrinogen-III oxidase family. As to quaternary structure, homodimer. Requires a divalent metal cation as cofactor.

The protein resides in the cytoplasm. The enzyme catalyses coproporphyrinogen III + O2 + 2 H(+) = protoporphyrinogen IX + 2 CO2 + 2 H2O. Its pathway is porphyrin-containing compound metabolism; protoporphyrin-IX biosynthesis; protoporphyrinogen-IX from coproporphyrinogen-III (O2 route): step 1/1. Involved in the heme biosynthesis. Catalyzes the aerobic oxidative decarboxylation of propionate groups of rings A and B of coproporphyrinogen-III to yield the vinyl groups in protoporphyrinogen-IX. In Shewanella piezotolerans (strain WP3 / JCM 13877), this protein is Oxygen-dependent coproporphyrinogen-III oxidase.